The sequence spans 374 residues: Queuine tRNA-ribosyltransferase (374 aa).

The active-site Proton acceptor is the Asp-89. Substrate-binding positions include 89 to 93, Asp-143, Gln-187, and Gly-214; that span reads DSGGF. The interval 245 to 251 is RNA binding; it reads GVGKPED. Asp-264 serves as the catalytic Nucleophile. The tract at residues 269–273 is RNA binding; important for wobble base 34 recognition; that stretch reads TRNAR. Zn(2+)-binding residues include Cys-302, Cys-304, Cys-307, and His-333.

The protein belongs to the queuine tRNA-ribosyltransferase family. In terms of assembly, homodimer. Within each dimer, one monomer is responsible for RNA recognition and catalysis, while the other monomer binds to the replacement base PreQ1. It depends on Zn(2+) as a cofactor.

The enzyme catalyses 7-aminomethyl-7-carbaguanine + guanosine(34) in tRNA = 7-aminomethyl-7-carbaguanosine(34) in tRNA + guanine. It functions in the pathway tRNA modification; tRNA-queuosine biosynthesis. Its function is as follows. Catalyzes the base-exchange of a guanine (G) residue with the queuine precursor 7-aminomethyl-7-deazaguanine (PreQ1) at position 34 (anticodon wobble position) in tRNAs with GU(N) anticodons (tRNA-Asp, -Asn, -His and -Tyr). Catalysis occurs through a double-displacement mechanism. The nucleophile active site attacks the C1' of nucleotide 34 to detach the guanine base from the RNA, forming a covalent enzyme-RNA intermediate. The proton acceptor active site deprotonates the incoming PreQ1, allowing a nucleophilic attack on the C1' of the ribose to form the product. After dissociation, two additional enzymatic reactions on the tRNA convert PreQ1 to queuine (Q), resulting in the hypermodified nucleoside queuosine (7-(((4,5-cis-dihydroxy-2-cyclopenten-1-yl)amino)methyl)-7-deazaguanosine). This chain is Queuine tRNA-ribosyltransferase, found in Shewanella oneidensis (strain ATCC 700550 / JCM 31522 / CIP 106686 / LMG 19005 / NCIMB 14063 / MR-1).